Here is a 329-residue protein sequence, read N- to C-terminus: Ubiquitin carboxyl-terminal hydrolase isozyme L5 (329 aa).

The region spanning 7 to 225 (EWCLMESDPG…IRFNLMAIVS (219 aa)) is the UCH catalytic domain. Residue Lys47 is modified to N6-succinyllysine. Residue Cys88 is the Nucleophile of the active site. Lys158 bears the N6-acetyllysine mark. His164 serves as the catalytic Proton donor. Residue Lys289 is modified to N6-succinyllysine. Positions 291-319 (NYLPFIMELLKTLAEHQQLIPLVEKAKEK) constitute a ULD domain. Residues 313 to 329 (VEKAKEKQNAKKAQETK) are interaction with ADRM1.

It belongs to the peptidase C12 family. In terms of assembly, component of the 19S (PA700) regulatory complex of the 26S proteasome. Interacts with ADRM1 and NFRKB. Component of the INO80 complex; specifically part of a complex module associated with N-terminus of INO80.

Its subcellular location is the cytoplasm. It localises to the nucleus. The catalysed reaction is Thiol-dependent hydrolysis of ester, thioester, amide, peptide and isopeptide bonds formed by the C-terminal Gly of ubiquitin (a 76-residue protein attached to proteins as an intracellular targeting signal).. With respect to regulation, activated by ADRM1. Inhibited by interaction with NFRKB. Its function is as follows. Protease that specifically cleaves 'Lys-48'-linked polyubiquitin chains. Deubiquitinating enzyme associated with the 19S regulatory subunit of the 26S proteasome. Putative regulatory component of the INO80 complex; however is inactive in the INO80 complex and is activated by a transient interaction of the INO80 complex with the proteasome via ADRM1. In Sus scrofa (Pig), this protein is Ubiquitin carboxyl-terminal hydrolase isozyme L5 (UCHL5).